The sequence spans 243 residues: Venom nerve growth factor 1 (243 aa).

The signal sequence occupies residues Met-1 to Ala-18. The propeptide occupies Ala-19–Arg-125. A compositionally biased stretch (basic and acidic residues) spans Gly-47–Asp-66. The disordered stretch occupies residues Gly-47 to Leu-69. Disulfide bonds link Cys-139/Cys-204, Cys-182/Cys-232, and Cys-192/Cys-234. N-linked (GlcNAc...) asparagine glycosylation occurs at Asn-148.

Belongs to the NGF-beta family. In terms of assembly, homodimer; non-covalently linked. Expressed by the venom gland.

It is found in the secreted. Its function is as follows. Nerve growth factor is important for the development and maintenance of the sympathetic and sensory nervous systems. It stimulates division and differentiation of sympathetic and embryonic sensory neurons as well as basal forebrain cholinergic neurons in the brain. Its relevance in the snake venom is not clear. However, it has been shown to inhibit metalloproteinase-dependent proteolysis of platelet glycoprotein Ib alpha, suggesting a metalloproteinase inhibition to prevent metalloprotease autodigestion and/or protection against prey proteases. Binds a lipid between the two protein chains in the homodimer. The lipid-bound form promotes histamine relase from mouse mast cells, contrary to the lipid-free form. This Pseudonaja textilis (Eastern brown snake) protein is Venom nerve growth factor 1.